The chain runs to 119 residues: RIIa domain-containing protein 1 (119 aa).

The RIIa domain maps to K70–L104.

In terms of tissue distribution, abundant in tissues rich in highly ciliated cells, such as testis, trachea and olfactory epithelium.

The sequence is that of RIIa domain-containing protein 1 (Riiad1) from Mus musculus (Mouse).